The chain runs to 426 residues: Glutamate-1-semialdehyde 2,1-aminomutase (426 aa).

The residue at position 265 (K265) is an N6-(pyridoxal phosphate)lysine.

The protein belongs to the class-III pyridoxal-phosphate-dependent aminotransferase family. HemL subfamily. As to quaternary structure, homodimer. It depends on pyridoxal 5'-phosphate as a cofactor.

Its subcellular location is the cytoplasm. It catalyses the reaction (S)-4-amino-5-oxopentanoate = 5-aminolevulinate. It functions in the pathway porphyrin-containing compound metabolism; protoporphyrin-IX biosynthesis; 5-aminolevulinate from L-glutamyl-tRNA(Glu): step 2/2. This is Glutamate-1-semialdehyde 2,1-aminomutase from Actinobacillus pleuropneumoniae serotype 5b (strain L20).